The primary structure comprises 147 residues: Anti-sigma F factor (147 aa).

This sequence belongs to the anti-sigma-factor family.

It carries out the reaction L-seryl-[protein] + ATP = O-phospho-L-seryl-[protein] + ADP + H(+). It catalyses the reaction L-threonyl-[protein] + ATP = O-phospho-L-threonyl-[protein] + ADP + H(+). Functionally, binds to sigma F and blocks its ability to form an RNA polymerase holoenzyme (E-sigma F). Phosphorylates SpoIIAA on a serine residue. This phosphorylation may enable SpoIIAA to act as an anti-anti-sigma factor that counteracts SpoIIAB and thus releases sigma F from inhibition. This Heyndrickxia coagulans (Weizmannia coagulans) protein is Anti-sigma F factor.